The chain runs to 148 residues: uncharacterized protein (148 aa).

Positions 83–148 (QPAVIPPVKA…TKKSNKKTRS (66 aa)) are disordered. Basic residues-rich tracts occupy residues 92-103 (AKPKATKKKTPV) and 113-124 (KQTKPKQSKPKS).

This is an uncharacterized protein from Mycoplasma genitalium (strain ATCC 33530 / DSM 19775 / NCTC 10195 / G37) (Mycoplasmoides genitalium).